Consider the following 298-residue polypeptide: Ribosomal RNA small subunit methyltransferase H (298 aa).

Residues 46-48 (GGH), aspartate 65, phenylalanine 92, aspartate 108, and histidine 115 contribute to the S-adenosyl-L-methionine site.

This sequence belongs to the methyltransferase superfamily. RsmH family.

The protein localises to the cytoplasm. The enzyme catalyses cytidine(1402) in 16S rRNA + S-adenosyl-L-methionine = N(4)-methylcytidine(1402) in 16S rRNA + S-adenosyl-L-homocysteine + H(+). Its function is as follows. Specifically methylates the N4 position of cytidine in position 1402 (C1402) of 16S rRNA. The polypeptide is Ribosomal RNA small subunit methyltransferase H (Nostoc punctiforme (strain ATCC 29133 / PCC 73102)).